The sequence spans 752 residues: DNA ligase (752 aa).

Residues 48-52 (DADYD), 97-98 (SL), and Glu131 each bind NAD(+). The N6-AMP-lysine intermediate role is filled by Lys133. Arg154, Glu189, Lys305, and Lys329 together coordinate NAD(+). Zn(2+) is bound by residues Cys434, Cys437, Cys452, and Cys458. Positions 599 to 615 (ADEGRRASLQPQRDKAW) are enriched in basic and acidic residues. The disordered stretch occupies residues 599-618 (ADEGRRASLQPQRDKAWADT). The BRCT domain maps to 673–752 (ATQSAVAGLT…EQWLDRIGDA (80 aa)).

It belongs to the NAD-dependent DNA ligase family. LigA subfamily. Mg(2+) is required as a cofactor. The cofactor is Mn(2+).

It catalyses the reaction NAD(+) + (deoxyribonucleotide)n-3'-hydroxyl + 5'-phospho-(deoxyribonucleotide)m = (deoxyribonucleotide)n+m + AMP + beta-nicotinamide D-nucleotide.. Its function is as follows. DNA ligase that catalyzes the formation of phosphodiester linkages between 5'-phosphoryl and 3'-hydroxyl groups in double-stranded DNA using NAD as a coenzyme and as the energy source for the reaction. It is essential for DNA replication and repair of damaged DNA. The polypeptide is DNA ligase (Jannaschia sp. (strain CCS1)).